Here is a 164-residue protein sequence, read N- to C-terminus: Transcriptional repressor NrdR (164 aa).

A zinc finger lies at 3 to 34; that stretch reads CPFCRHDDTQVVDSRVSEDGAAIRRRRRCPAC. Residues 49-139 enclose the ATP-cone domain; the sequence is PSVVKKDGSR…VYRRFEDVSE (91 aa).

It belongs to the NrdR family. Zn(2+) serves as cofactor.

In terms of biological role, negatively regulates transcription of bacterial ribonucleotide reductase nrd genes and operons by binding to NrdR-boxes. The protein is Transcriptional repressor NrdR of Paraburkholderia phymatum (strain DSM 17167 / CIP 108236 / LMG 21445 / STM815) (Burkholderia phymatum).